Reading from the N-terminus, the 211-residue chain is MLIKVCGLTRQADVDLAASFGASMCGFIFHPVSPRCVSPVQAASLESGSMLRVGVFVEQDAEEICRIMAEARLDMAQLHGRQDAACARAVGAQRVIRVIWPARYCHRALLYNELQNHADACACYLLDAGLAGGGSGVRLDWEDLNHLPSPRPWLLAGGLSAENVGLALSRCSPDGVDFNSGVEDAPGQKNAQKLAAALAVAAKQKGNRYLS.

This sequence belongs to the TrpF family.

It carries out the reaction N-(5-phospho-beta-D-ribosyl)anthranilate = 1-(2-carboxyphenylamino)-1-deoxy-D-ribulose 5-phosphate. The protein operates within amino-acid biosynthesis; L-tryptophan biosynthesis; L-tryptophan from chorismate: step 3/5. This Desulfovibrio desulfuricans (strain ATCC 27774 / DSM 6949 / MB) protein is N-(5'-phosphoribosyl)anthranilate isomerase.